The primary structure comprises 368 residues: UDP-N-acetylglucosamine--N-acetylmuramyl-(pentapeptide) pyrophosphoryl-undecaprenol N-acetylglucosamine transferase (368 aa).

UDP-N-acetyl-alpha-D-glucosamine is bound by residues 14 to 16 (TGG), Asn125, Arg168, Ser196, and Gln297.

The protein belongs to the glycosyltransferase 28 family. MurG subfamily.

It localises to the cell inner membrane. It carries out the reaction di-trans,octa-cis-undecaprenyl diphospho-N-acetyl-alpha-D-muramoyl-L-alanyl-D-glutamyl-meso-2,6-diaminopimeloyl-D-alanyl-D-alanine + UDP-N-acetyl-alpha-D-glucosamine = di-trans,octa-cis-undecaprenyl diphospho-[N-acetyl-alpha-D-glucosaminyl-(1-&gt;4)]-N-acetyl-alpha-D-muramoyl-L-alanyl-D-glutamyl-meso-2,6-diaminopimeloyl-D-alanyl-D-alanine + UDP + H(+). It participates in cell wall biogenesis; peptidoglycan biosynthesis. Its function is as follows. Cell wall formation. Catalyzes the transfer of a GlcNAc subunit on undecaprenyl-pyrophosphoryl-MurNAc-pentapeptide (lipid intermediate I) to form undecaprenyl-pyrophosphoryl-MurNAc-(pentapeptide)GlcNAc (lipid intermediate II). The sequence is that of UDP-N-acetylglucosamine--N-acetylmuramyl-(pentapeptide) pyrophosphoryl-undecaprenol N-acetylglucosamine transferase from Nitrobacter winogradskyi (strain ATCC 25391 / DSM 10237 / CIP 104748 / NCIMB 11846 / Nb-255).